Reading from the N-terminus, the 352-residue chain is NAD(P)H oxidoreductase RTN4IP1, mitochondrial (352 aa).

One can recognise an Enoyl reductase (ER) domain in the interval 11 to 348; that stretch reads ESLDLLEYKT…NSNSNGKIII (338 aa). NADPH contacts are provided by V165, Y206, A296, and F298.

Belongs to the zinc-containing alcohol dehydrogenase family. Quinone oxidoreductase subfamily.

The protein resides in the mitochondrion matrix. It carries out the reaction a quinone + NADH + H(+) = a quinol + NAD(+). The enzyme catalyses a quinone + NADPH + H(+) = a quinol + NADP(+). Its pathway is cofactor biosynthesis; ubiquinone biosynthesis. NAD(P)H oxidoreductase involved in the ubiquinone biosynthetic pathway. Required for the O-methyltransferase activity of coq3. The polypeptide is NAD(P)H oxidoreductase RTN4IP1, mitochondrial (rtn4ip1) (Dictyostelium discoideum (Social amoeba)).